The primary structure comprises 331 residues: Vitamin B12 import system permease protein BtuC (331 aa).

Helical transmembrane passes span 20–42 (IMSV…FLSP), 62–84 (LVAA…VLLG), 91–113 (GVLG…LPVL), 118–140 (IFML…IARA), 147–169 (RLLL…AFYF), 189–208 (ASWY…VWLC), 240–262 (LAIS…VGLV), 277–299 (YLLP…GARL), and 306–325 (LPLG…WMLV).

It belongs to the binding-protein-dependent transport system permease family. FecCD subfamily. In terms of assembly, the complex is composed of two ATP-binding proteins (BtuD), two transmembrane proteins (BtuC) and a solute-binding protein (BtuF).

Its subcellular location is the cell inner membrane. Part of the ABC transporter complex BtuCDF involved in vitamin B12 import. Involved in the translocation of the substrate across the membrane. This Vibrio parahaemolyticus serotype O3:K6 (strain RIMD 2210633) protein is Vitamin B12 import system permease protein BtuC.